A 298-amino-acid chain; its full sequence is MFKSGFVAILGRPNVGKSTFLNHVMGQKIAIMSDKAQSTRNKIMGIYTTETEQIVFIDTPGIHKPKTALGDFMVESAYSTLREVETVLFMVPADEKRGKGDDMIIERLKAARIPVILVINKIDKVHPDQLLEQIDDFRSQMDFKEIVPISALQGNNVETLVQLLKDNLEEGFQYFPEDQITDHPERFLVSEMVREKVLHLTQQEVPHSVAVVVDSMKRDEVTDKVHIRVTIMVERDSQKGIIIGKQGAMLKKIGKLARRDIELMLGDKVYLETWVKVKKNWRDKKLDLADFGYNQKEY.

The 168-residue stretch at 3–170 folds into the Era-type G domain; it reads KSGFVAILGR…VQLLKDNLEE (168 aa). The tract at residues 11–18 is G1; that stretch reads GRPNVGKS. 11-18 is a GTP binding site; that stretch reads GRPNVGKS. Residues 37–41 form a G2 region; sequence QSTRN. A G3 region spans residues 58-61; it reads DTPG. GTP is bound by residues 58 to 62 and 120 to 123; these read DTPGI and NKID. Residues 120 to 123 are G4; that stretch reads NKID. Positions 149–151 are G5; the sequence is ISA. Residues 201 to 279 enclose the KH type-2 domain; the sequence is TQQEVPHSVA…YLETWVKVKK (79 aa).

It belongs to the TRAFAC class TrmE-Era-EngA-EngB-Septin-like GTPase superfamily. Era GTPase family. Monomer.

The protein localises to the cytoplasm. The protein resides in the cell membrane. In terms of biological role, an essential GTPase that binds both GDP and GTP, with rapid nucleotide exchange. Plays a role in 16S rRNA processing and 30S ribosomal subunit biogenesis and possibly also in cell cycle regulation and energy metabolism. This chain is GTPase Era, found in Streptococcus equi subsp. zooepidemicus (strain H70).